A 381-amino-acid chain; its full sequence is Putative 8-amino-7-oxononanoate synthase (381 aa).

R22 lines the substrate pocket. A pyridoxal 5'-phosphate-binding site is contributed by 109–110; it reads GF. H134 contacts substrate. Residues S182, 207 to 210, and 233 to 236 contribute to the pyridoxal 5'-phosphate site; these read DDAH and TLSK. K236 carries the post-translational modification N6-(pyridoxal phosphate)lysine. Residue T345 coordinates substrate.

It belongs to the class-II pyridoxal-phosphate-dependent aminotransferase family. BioF subfamily. As to quaternary structure, homodimer. Pyridoxal 5'-phosphate serves as cofactor.

It carries out the reaction 6-carboxyhexanoyl-[ACP] + L-alanine + H(+) = (8S)-8-amino-7-oxononanoate + holo-[ACP] + CO2. Its pathway is cofactor biosynthesis; biotin biosynthesis. Its function is as follows. Catalyzes the decarboxylative condensation of pimeloyl-[acyl-carrier protein] and L-alanine to produce 8-amino-7-oxononanoate (AON), [acyl-carrier protein], and carbon dioxide. The polypeptide is Putative 8-amino-7-oxononanoate synthase (bioF) (Acidiphilium cryptum (strain JF-5)).